The primary structure comprises 335 residues: Beta-ketoacyl-[acyl-carrier-protein] synthase III (335 aa).

Active-site residues include Cys-119 and His-261. The segment at 262-266 (QANQR) is ACP-binding. Asn-291 is a catalytic residue.

The protein belongs to the thiolase-like superfamily. FabH family. As to quaternary structure, homodimer.

It localises to the cytoplasm. It carries out the reaction malonyl-[ACP] + acetyl-CoA + H(+) = 3-oxobutanoyl-[ACP] + CO2 + CoA. It functions in the pathway lipid metabolism; fatty acid biosynthesis. Its function is as follows. Catalyzes the condensation reaction of fatty acid synthesis by the addition to an acyl acceptor of two carbons from malonyl-ACP. Catalyzes the first condensation reaction which initiates fatty acid synthesis and may therefore play a role in governing the total rate of fatty acid production. Possesses both acetoacetyl-ACP synthase and acetyl transacylase activities. Its substrate specificity determines the biosynthesis of branched-chain and/or straight-chain of fatty acids. The polypeptide is Beta-ketoacyl-[acyl-carrier-protein] synthase III (Prochlorococcus marinus (strain MIT 9301)).